A 431-amino-acid chain; its full sequence is Serine--tRNA ligase (431 aa).

236 to 238 serves as a coordination point for L-serine; that stretch reads TAE. 267–269 is an ATP binding site; the sequence is RSE. Position 290 (Glu-290) interacts with L-serine. ATP is bound at residue 354–357; it reads EISS. Ser-389 serves as a coordination point for L-serine.

Belongs to the class-II aminoacyl-tRNA synthetase family. Type-1 seryl-tRNA synthetase subfamily. Homodimer. The tRNA molecule binds across the dimer.

It is found in the cytoplasm. It catalyses the reaction tRNA(Ser) + L-serine + ATP = L-seryl-tRNA(Ser) + AMP + diphosphate + H(+). It carries out the reaction tRNA(Sec) + L-serine + ATP = L-seryl-tRNA(Sec) + AMP + diphosphate + H(+). Its pathway is aminoacyl-tRNA biosynthesis; selenocysteinyl-tRNA(Sec) biosynthesis; L-seryl-tRNA(Sec) from L-serine and tRNA(Sec): step 1/1. Functionally, catalyzes the attachment of serine to tRNA(Ser). Is also able to aminoacylate tRNA(Sec) with serine, to form the misacylated tRNA L-seryl-tRNA(Sec), which will be further converted into selenocysteinyl-tRNA(Sec). The sequence is that of Serine--tRNA ligase from Janthinobacterium sp. (strain Marseille) (Minibacterium massiliensis).